We begin with the raw amino-acid sequence, 167 residues long: Peptide deformylase (167 aa).

Fe cation-binding residues include Cys90 and His132. Residue Glu133 is part of the active site. His136 lines the Fe cation pocket.

Belongs to the polypeptide deformylase family. It depends on Fe(2+) as a cofactor.

It carries out the reaction N-terminal N-formyl-L-methionyl-[peptide] + H2O = N-terminal L-methionyl-[peptide] + formate. Removes the formyl group from the N-terminal Met of newly synthesized proteins. Requires at least a dipeptide for an efficient rate of reaction. N-terminal L-methionine is a prerequisite for activity but the enzyme has broad specificity at other positions. This Dehalococcoides mccartyi (strain ATCC BAA-2100 / JCM 16839 / KCTC 5957 / BAV1) protein is Peptide deformylase.